A 158-amino-acid polypeptide reads, in one-letter code: Small ribosomal subunit protein uS9 (158 aa).

It belongs to the universal ribosomal protein uS9 family.

The polypeptide is Small ribosomal subunit protein uS9 (Nitrobacter winogradskyi (strain ATCC 25391 / DSM 10237 / CIP 104748 / NCIMB 11846 / Nb-255)).